Reading from the N-terminus, the 485-residue chain is ATP-dependent 6-phosphofructokinase (485 aa).

ATP-binding positions include glycine 105, 171-172, and 196-199; these read RG and GDGT. Mg(2+) is bound at residue aspartate 197. Substrate-binding positions include 225 to 227, 270 to 272, glutamate 323, and 378 to 381; these read TID, MGR, and YMIR. The active-site Proton acceptor is the aspartate 227. Residues 483–485 carry the Peroxisomal targeting signal motif; sequence SKL.

This sequence belongs to the phosphofructokinase type A (PFKA) family. PPi-dependent PFK group II subfamily. Atypical ATP-dependent clade 'X' sub-subfamily. Homotetramer. Mg(2+) is required as a cofactor.

The protein localises to the glycosome. It catalyses the reaction beta-D-fructose 6-phosphate + ATP = beta-D-fructose 1,6-bisphosphate + ADP + H(+). It participates in carbohydrate degradation; glycolysis; D-glyceraldehyde 3-phosphate and glycerone phosphate from D-glucose: step 3/4. Its activity is regulated as follows. Allosterically activated by AMP. Functionally, catalyzes the phosphorylation of D-fructose 6-phosphate to fructose 1,6-bisphosphate by ATP, the first committing step of glycolysis. The chain is ATP-dependent 6-phosphofructokinase from Trypanosoma cruzi (strain CL Brener).